Here is a 413-residue protein sequence, read N- to C-terminus: uncharacterized protein (413 aa).

One can recognise an N-acetyltransferase domain in the interval 3–155; the sequence is MEPRVLRREE…SRVRLSVPAG (153 aa). Acetyl-CoA contacts are provided by residues 86–88, 94–99, and 122–123; these read VSV, RRGVLT, and SE. Tyr127 functions as the Proton donor in the catalytic mechanism. The active-site Proton acceptor; via carboxylate is Phe413.

It belongs to the acetyltransferase Eis family. Homohexamer; trimer of dimers.

This is an uncharacterized protein from Streptomyces coelicolor (strain ATCC BAA-471 / A3(2) / M145).